Here is a 412-residue protein sequence, read N- to C-terminus: 4-hydroxy-3-methylbut-2-en-1-yl diphosphate synthase (ferredoxin) (412 aa).

A compositionally biased stretch (polar residues) spans Met-1–Gln-12. Positions Met-1 to Arg-22 are disordered. [4Fe-4S] cluster is bound by residues Cys-314, Cys-317, Cys-348, and Glu-355.

The protein belongs to the IspG family. [4Fe-4S] cluster serves as cofactor.

It carries out the reaction (2E)-4-hydroxy-3-methylbut-2-enyl diphosphate + 2 oxidized [2Fe-2S]-[ferredoxin] + H2O = 2-C-methyl-D-erythritol 2,4-cyclic diphosphate + 2 reduced [2Fe-2S]-[ferredoxin] + H(+). The protein operates within isoprenoid biosynthesis; isopentenyl diphosphate biosynthesis via DXP pathway; isopentenyl diphosphate from 1-deoxy-D-xylulose 5-phosphate: step 5/6. Its function is as follows. Converts 2C-methyl-D-erythritol 2,4-cyclodiphosphate (ME-2,4cPP) into 1-hydroxy-2-methyl-2-(E)-butenyl 4-diphosphate. This is 4-hydroxy-3-methylbut-2-en-1-yl diphosphate synthase (ferredoxin) from Synechococcus sp. (strain JA-3-3Ab) (Cyanobacteria bacterium Yellowstone A-Prime).